A 519-amino-acid polypeptide reads, in one-letter code: Protein tweety homolog 1 (519 aa).

Residues 1-42 are Extracellular-facing; that stretch reads MTFASFLINFYSVIPRLNFKFHWTNDVFNLEWSSEYFQALAL. The helical transmembrane segment at 43 to 63 threads the bilayer; the sequence is VACLGAAVSLLLLVTIIIVWI. Residues 64-82 lie on the Cytoplasmic side of the membrane; sequence CQACHKNETTGKTRRRVRR. A helical membrane pass occupies residues 83–103; the sequence is LSTVLFIISVLCFFMLGVCLF. The Extracellular segment spans residues 104–217; the sequence is ANEHVNRGMS…VLSLYESERW (114 aa). N-linked (GlcNAc...) asparagine glycosylation is found at asparagine 142, asparagine 163, and asparagine 176. A helical transmembrane segment spans residues 218–238; that stretch reads AFLVILLSITMVVLFTGVVAF. Topologically, residues 239–245 are cytoplasmic; sequence CKQSKKG. The chain crosses the membrane as a helical span at residues 246–266; sequence AVVFSAIGFFIFVVVWLLISI. Over 267-395 the chain is Extracellular; it reads SLPLTIALAD…GTCNQSVAGM (129 aa). Residues asparagine 328, asparagine 341, asparagine 348, and asparagine 389 are each glycosylated (N-linked (GlcNAc...) asparagine). A helical membrane pass occupies residues 396–416; the sequence is SIYMLSILLLGVFLFILLIVV. Over 417–519 the chain is Cytoplasmic; it reads SKTWNLFSRL…YNNYEDRYNM (103 aa). The tract at residues 459-485 is disordered; it reads YNPRTRDRTEPSTNTTSGTADEPNAPL.

It belongs to the tweety family.

The protein resides in the cell membrane. Its function is as follows. Probable chloride channel. The protein is Protein tweety homolog 1 (ttyh-1) of Caenorhabditis elegans.